The chain runs to 262 residues: Acyl-[acyl-carrier-protein]--UDP-N-acetylglucosamine O-acyltransferase (262 aa).

It belongs to the transferase hexapeptide repeat family. LpxA subfamily. As to quaternary structure, homotrimer.

It localises to the cytoplasm. The catalysed reaction is a (3R)-hydroxyacyl-[ACP] + UDP-N-acetyl-alpha-D-glucosamine = a UDP-3-O-[(3R)-3-hydroxyacyl]-N-acetyl-alpha-D-glucosamine + holo-[ACP]. The protein operates within glycolipid biosynthesis; lipid IV(A) biosynthesis; lipid IV(A) from (3R)-3-hydroxytetradecanoyl-[acyl-carrier-protein] and UDP-N-acetyl-alpha-D-glucosamine: step 1/6. In terms of biological role, involved in the biosynthesis of lipid A, a phosphorylated glycolipid that anchors the lipopolysaccharide to the outer membrane of the cell. The protein is Acyl-[acyl-carrier-protein]--UDP-N-acetylglucosamine O-acyltransferase of Salmonella paratyphi B (strain ATCC BAA-1250 / SPB7).